The following is a 460-amino-acid chain: Cysteine--tRNA ligase (460 aa).

C28 lines the Zn(2+) pocket. Residues 30-40 carry the 'HIGH' region motif; that stretch reads MTVYDYCHLGH. Positions 209, 234, and 238 each coordinate Zn(2+). Positions 266–270 match the 'KMSKS' region motif; sequence KMSKS. K269 is an ATP binding site.

Belongs to the class-I aminoacyl-tRNA synthetase family. As to quaternary structure, monomer. It depends on Zn(2+) as a cofactor.

It localises to the cytoplasm. It carries out the reaction tRNA(Cys) + L-cysteine + ATP = L-cysteinyl-tRNA(Cys) + AMP + diphosphate. The protein is Cysteine--tRNA ligase of Pseudomonas entomophila (strain L48).